Reading from the N-terminus, the 491-residue chain is CTD small phosphatase-like protein 1 (491 aa).

Disordered stretches follow at residues 1–53, 140–198, 221–249, and 261–282; these read MTYA…SLDY, KLTK…TARR, KIQS…TGPP, and TVTG…DGVT. Over residues 17–26 the composition is skewed to pro residues; that stretch reads VPPPRTPVGP. The span at 37–49 shows a compositional bias: polar residues; sequence SASQPLQPKNGAN. Over residues 141–156 the composition is skewed to basic and acidic residues; the sequence is LTKDEKNGGKMNRDGG. The span at 176–187 shows a compositional bias: polar residues; the sequence is ASTPLNSFSANA. Residues 223–237 are compositionally biased toward low complexity; sequence QSSQRTNSTNNNHQN. Polar residues-rich tracts occupy residues 238-249 and 264-276; these read GRPSTPTNTGPP and GLPT…QQNG. An FCP1 homology domain is found at 307 to 465; it reads QDSNKKCLVI…LDILPSLEHL (159 aa). The active-site 4-aspartylphosphate intermediate is the aspartate 317. 3 residues coordinate Mg(2+): aspartate 317, aspartate 319, and asparagine 428. Aspartate 319 functions as the Proton donor in the catalytic mechanism.

As to quaternary structure, may interact (via phosphatase domain) with cpna-1. Isoform a and isoform b may interact with lim-9 (via LIM zinc-binding domain). Isoform a and isoform b may interact (via FCP1 homology domain) with unc-89 (via fibronectin type-III domain 1, Ig-like C2-type domain 48/49 and protein kinase domain 1 or Ig-like C2-type domain 50, fibronectin type-III domain 2 and protein kinase domain 2); the interaction may act as a molecular bridge to bring two unc-89 molecules together or to stabilize a loop between the 2 protein kinase domains. Requires Mg(2+) as cofactor. In terms of tissue distribution, expressed in pharyngeal, vulval and body wall muscles.

It is found in the cytoplasm. It localises to the myofibril. Its subcellular location is the sarcomere. The protein localises to the m line. The enzyme catalyses O-phospho-L-seryl-[protein] + H2O = L-seryl-[protein] + phosphate. The catalysed reaction is O-phospho-L-threonyl-[protein] + H2O = L-threonyl-[protein] + phosphate. With respect to regulation, inhibited by beryllium trifluoride (BeF(3-)) and tetrafluoroaluminate (AlF(4-)) but not by sodium fluoride (NaF) or sodium orthovanadate (Na3VO4). Functionally, phosphatase which may play a role in the egg laying muscles. The protein is CTD small phosphatase-like protein 1 of Caenorhabditis elegans.